Reading from the N-terminus, the 4652-residue chain is Low-density lipoprotein receptor-related protein 2 (4652 aa).

Residues 1–25 (MERWAAAAACTLLLAFAACLAPASG) form the signal peptide. Residues 26–4422 (RECLGNEFRC…SKGISPGTTV (4397 aa)) lie on the Extracellular side of the membrane. LDL-receptor class A domains follow at residues 27–63 (ECLG…IGCP), 66–104 (TCGS…QRCP), 108–144 (TCSS…INCR), 142–181 (NCRY…LNCT), 183–219 (RCLR…HSCS), 223–259 (PCKG…DGCE), and 267–308 (ECYP…RVCD). 21 cysteine pairs are disulfide-bonded: C28–C40, C35–C53, C47–C62, C67–C80, C74–C93, C87–C103, C109–C121, C116–C134, C128–C143, C143–C158, C153–C171, C165–C180, C184–C196, C191–C209, C203–C218, C224–C236, C231–C249, C243–C258, C268–C281, C275–C294, and C288–C307. N-linked (GlcNAc...) asparagine glycans are attached at residues N160 and N179. Residue N341 is glycosylated (N-linked (GlcNAc...) asparagine). The region spanning 348–386 (DFNDCQIWGICDHFCEDRIGHHQCFCAEGYVLEHEQHCR) is the EGF-like 1; calcium-binding domain. 3 disulfides stabilise this stretch: C352–C362, C358–C371, and C373–C385. N-linked (GlcNAc...) asparagine glycosylation occurs at N388. LDL-receptor class B repeat units follow at residues 436–478 (SKVF…DWIN), 479–521 (NKLY…DPTV), 522–568 (GYLF…DLVA), 569–613 (KRVY…FEDN), 753–795 (NAIF…DWIS), 796–837 (RNLY…HPIA), 838–881 (GYIF…DWGS), and 882–925 (SRLY…FGEY). A glycan (N-linked (GlcNAc...) asparagine) is linked at N771. N866 carries N-linked (GlcNAc...) asparagine glycosylation. A glycan (N-linked (GlcNAc...) asparagine) is linked at N1015. The LDL-receptor class A 8 domain maps to 1025–1061 (QCGALSFPCNNGRCVPLHYRCDGVDDCHDNSDEVQCG). 3 cysteine pairs are disulfide-bonded: C1026–C1038, C1033–C1051, and C1045–C1060. N-linked (GlcNAc...) asparagine glycosylation is present at N1064. LDL-receptor class A domains follow at residues 1066–1104 (SCAP…QNCS), 1110–1146 (SCRA…KRCD), 1150–1186 (TCSP…SACV), 1188–1225 (NCTD…IDCP), 1231–1269 (MCRQ…SGCP), 1272–1308 (TCPX…KDCP), and 1313–1351 (LCPS…PLCN). 9 cysteine pairs are disulfide-bonded: C1067–C1081, C1074–C1094, C1088–C1103, C1111–C1123, C1118–C1136, C1130–C1145, C1151–C1163, C1158–C1176, and C1170–C1185. N-linked (GlcNAc...) asparagine glycosylation is present at N1102. Residues W1128, D1131, D1133, D1135, D1141, and E1142 each coordinate Ca(2+). N1188 carries an N-linked (GlcNAc...) asparagine glycan. 12 disulfides stabilise this stretch: C1189–C1202, C1196–C1215, C1209–C1224, C1232–C1245, C1239–C1258, C1252–C1268, C1273–C1285, C1280–C1298, C1292–C1307, C1314–C1327, C1321–C1340, and C1334–C1350. The Ca(2+) site is built by Y1207, D1210, V1212, D1214, D1220, and E1221. N-linked (GlcNAc...) asparagine glycosylation occurs at N1329. N-linked (GlcNAc...) asparagine glycans are attached at residues N1385, N1452, N1498, and N1552. 10 LDL-receptor class B repeats span residues 1480–1522 (GRIF…DWVG), 1523–1565 (RNLY…DPRV), 1568–1611 (RVIF…DYPT), 1612–1654 (RLLY…TIFE), 1655–1696 (DSIY…VHPA), 1789–1831 (QFLY…DWLS), 1832–1881 (RNLY…DPAK), 1882–1929 (GKLY…DIQE), 1930–1971 (QKLY…YGPY), and 1972–2012 (LYYA…YRRR). Residues N1677 and N1809 are each glycosylated (N-linked (GlcNAc...) asparagine). N2053 is a glycosylation site (N-linked (GlcNAc...) asparagine). LDL-receptor class B repeat units lie at residues 2105–2154 (GFVY…DWVA), 2155–2199 (GNLY…DPKN), 2200–2243 (RYLF…DHNS), 2244–2287 (GYIY…FGNS), 2429–2475 (NRIY…DWIG), 2476–2516 (RRIY…DPCQ), 2517–2560 (GYMY…DYKE), 2561–2602 (NLLY…YGQY), and 2603–2644 (IYWT…VVNN). N2175 and N2222 each carry an N-linked (GlcNAc...) asparagine glycan. A glycan (N-linked (GlcNAc...) asparagine) is linked at N2485. 10 LDL-receptor class A domains span residues 2696–2734 (RCNS…TLCA), 2737–2773 (TCPP…SGCR), 2776–2815 (SCNI…KNCA), 2818–2857 (TCLP…IYCV), 2860–2897 (TCKN…ATCV), 2902–2941 (TCSS…HHCE), 2944–2986 (NCSS…QNCT), 2989–3025 (NCSG…RNCK), 3028–3066 (ACDE…HLCH), and 3071–3107 (TCPP…ERCG). Cystine bridges form between C2697–C2709, C2704–C2722, C2716–C2733, C2738–C2750, C2745–C2763, C2757–C2772, C2777–C2790, C2785–C2803, C2797–C2814, C2819–C2832, C2826–C2845, C2839–C2856, C2861–C2873, C2868–C2886, C2880–C2896, C2903–C2915, C2910–C2928, and C2922–C2940. N2698 carries N-linked (GlcNAc...) asparagine glycosylation. N-linked (GlcNAc...) asparagine glycosylation is present at N2778. N-linked (GlcNAc...) asparagine glycans are attached at residues N2806 and N2807. The N-linked (GlcNAc...) asparagine glycan is linked to N2944. 3 disulfides stabilise this stretch: C2945/C2962, C2952/C2975, and C2969/C2985. N-linked (GlcNAc...) asparagine glycosylation is found at N2984 and N2989. 9 disulfide bridges follow: C2990/C3002, C2997/C3015, C3009/C3024, C3029/C3041, C3036/C3054, C3048/C3065, C3072/C3084, C3079/C3097, and C3091/C3106. N-linked (GlcNAc...) asparagine glycosylation occurs at N3122. The EGF-like 2; calcium-binding domain maps to 3149 to 3189 (DIDECKETPSVCSQKCENLLGSYICKCAPGYTREPDGRSCR). Disulfide bonds link C3153/C3164, C3160/C3173, and C3175/C3188. Residues N3208, N3254, N3312, and N3352 are each glycosylated (N-linked (GlcNAc...) asparagine). 5 LDL-receptor class B repeats span residues 3236-3278 (ERLY…DWVT), 3279-3321 (RKLY…DKPR), 3330-3373 (GYVY…DYTN), 3374-3417 (DLLY…FEDT), and 3418-3458 (IYWT…YHPY). N-linked (GlcNAc...) asparagine glycans are attached at residues N3435 and N3444. LDL-receptor class A domains lie at 3509 to 3547 (MCSS…NTCP), 3550 to 3588 (FCRL…VLCE), 3591 to 3629 (RCES…SHCA), 3632 to 3670 (TCLP…QECM), 3675 to 3713 (RCDN…QNCE), 3716 to 3753 (TCKP…ENCV), 3756 to 3792 (QCSE…RDCE), 3795 to 3831 (TCHP…ATCP), and 3839 to 3877 (YCPA…HLCL). 27 disulfide bridges follow: C3510–C3523, C3517–C3536, C3530–C3546, C3551–C3563, C3558–C3576, C3570–C3587, C3592–C3604, C3599–C3617, C3611–C3628, C3633–C3645, C3640–C3658, C3652–C3669, C3676–C3690, C3684–C3703, C3697–C3712, C3717–C3730, C3725–C3743, C3737–C3752, C3757–C3769, C3764–C3782, C3776–C3791, C3796–C3808, C3803–C3821, C3815–C3830, C3840–C3852, C3847–C3865, and C3859–C3876. N3562 carries an N-linked (GlcNAc...) asparagine glycan. N3678 is a glycosylation site (N-linked (GlcNAc...) asparagine). N-linked (GlcNAc...) asparagine glycosylation occurs at N3878. 2 consecutive LDL-receptor class A domains span residues 3880-3919 (TCDL…ENCL) and 3925-3961 (PCTE…TGCN). Disulfide bonds link C3881/C3894, C3889/C3907, C3901/C3918, C3926/C3938, C3933/C3951, C3945/C3960, C3968/C3977, C3973/C3987, C3989/C4003, C4009/C4019, C4015/C4028, and C4030/C4045. The 41-residue stretch at 3964 to 4004 (EERSCAENLCEHNCTQLIGGGFICSCRPGFKASSLNRNSCE) folds into the EGF-like 3 domain. N-linked (GlcNAc...) asparagine glycosylation occurs at N3976. Residues 4005-4046 (DINECEQFGVCPQNCHNTKGSYECTCAEGFRSMSEHYGERCA) form the EGF-like 4; calcium-binding domain. The N-linked (GlcNAc...) asparagine glycan is linked to N4066. LDL-receptor class B repeat units follow at residues 4152–4194 (RHIY…NPKQ), 4195–4238 (GLMY…DYVN), and 4240–4281 (DRIY…FESQ). N4325 carries N-linked (GlcNAc...) asparagine glycosylation. One can recognise an EGF-like 5 domain in the interval 4375-4409 (MPPPCRCMNEGNCYFDKNNLPKCKCPSGYMGEYCE). Cystine bridges form between C4379/C4387, C4381/C4397, and C4399/C4408. Residues 4423 to 4443 (AVLVTLILIIIIGGLVALGFF) form a helical membrane-spanning segment. At 4444 to 4652 (HYRKTGSILI…ANLVREDSEA (209 aa)) the chain is on the cytoplasmic side. The short motif at 4450-4459 (SILISMPRLP) is the SH3-binding element. The PxLPxI/L motif 1; mediates interaction with ANKRA2 motif lies at 4453-4458 (ISMPRL). The short motif at 4456-4461 (PRLPSL) is the PxLPxI/L motif 2; mediates interaction with ANKRA2 element. S4460 carries the phosphoserine modification. The Endocytosis signal signature appears at 4518 to 4523 (FENPMY). A compositionally biased stretch (polar residues) spans 4536 to 4553 (TTTQVSESGNVYNKNYGS). The disordered stretch occupies residues 4536–4652 (TTTQVSESGN…ANLVREDSEA (117 aa)). S4568 carries the phosphoserine modification. The segment at 4588-4601 (QNTNFENPIYAETE) is interaction with DAB2. An NPXY motif motif is present at residues 4594 to 4597 (NPIY). The SH2-binding signature appears at 4597–4600 (YAET). The SH3-binding motif lies at 4610-4621 (VTPPPSPSPPAK). S4615 is subject to Phosphoserine. A compositionally biased stretch (polar residues) spans 4626-4636 (KGTTPAYSATE). T4629 carries the post-translational modification Phosphothreonine. Residue S4650 is modified to Phosphoserine.

This sequence belongs to the LDLR family. As to quaternary structure, binds plasminogen, extracellular matrix components, plasminogen activator-plasminogen activator inhibitor type I complex, apolipoprotein E-enriched beta-VLDL, lipoprotein lipase, lactoferrin, CLU/clusterin and calcium. Forms a multimeric complex together with LRPAP1. Interacts (via PxLPxI/L motif) with ANKRA2 (via ankyrin repeats). Interacts with LRP2BP. Interacts (via NPXY motif) with DAB2; the interaction is not affected by tyrosine phosphorylation of the NPXY motif. Interacts with MB. Interacts with BMP4. Interacts with the Sonic hedgehog protein N-product which is the active product of SHH. Interacts with CST3 in a calcium-dependent manner. Interacts with the vitamin-D binding protein GC/DBP. Interacts with sex hormone-binding protein SHBG. Interacts with angiotensin-2. Also interacts with angiotensin 1-7. Interacts with APOM. Interacts with selenoprotein SEPP1. Interacts with LEP. Interacts with ALB. Interacts with the antiapoptotic protein BIRC5/survivin. Interacts with matrix metalloproteinase MMP2 in complex with metalloproteinase inhibitor TIMP1. In neurons, forms a trimeric complex with APP and APPB1/FE65. Interacts with LDLRAP1/ARH; mediates trafficking of LRP2 to the endocytic recycling compartment. Does not interact with beta-amyloid protein 40 alone but interacts with the complex composed of beta-amyloid protein 40 and CLU/APOJ. Interacts with MDK. Post-translationally, a fraction undergoes proteolytic cleavage of the extracellular domain at the cell membrane to generate a cytoplasmic tail fragment. This is internalized into the early endosome from where it trafficks in an LDLRAP1/ARH-dependent manner to the endocytic recycling compartment (ERC). In the ERC, it is further cleaved by gamma-secretase to release a fragment which translocates to the nucleus and mediates transcriptional repression. In terms of processing, N-glycosylation is required for ligand binding.

It localises to the apical cell membrane. It is found in the endosome lumen. The protein resides in the membrane. Its subcellular location is the clathrin-coated pit. The protein localises to the cell projection. It localises to the dendrite. It is found in the axon. In terms of biological role, multiligand endocytic receptor. Acts together with CUBN to mediate endocytosis of high-density lipoproteins. Mediates receptor-mediated uptake of polybasic drugs such as aprotinin, aminoglycosides and polymyxin B. In the kidney, mediates the tubular uptake and clearance of leptin. Also mediates transport of leptin across the blood-brain barrier through endocytosis at the choroid plexus epithelium. Endocytosis of leptin in neuronal cells is required for hypothalamic leptin signaling and leptin-mediated regulation of feeding and body weight. Mediates endocytosis and subsequent lysosomal degradation of CST3 in kidney proximal tubule cells. Mediates renal uptake of 25-hydroxyvitamin D3 in complex with the vitamin D3 transporter GC/DBP. Mediates renal uptake of metallothionein-bound heavy metals. Together with CUBN, mediates renal reabsorption of myoglobin. Mediates renal uptake and subsequent lysosomal degradation of APOM. Plays a role in kidney selenium homeostasis by mediating renal endocytosis of selenoprotein SEPP1. Mediates renal uptake of the antiapoptotic protein BIRC5/survivin which may be important for functional integrity of the kidney. Mediates renal uptake of matrix metalloproteinase MMP2 in complex with metalloproteinase inhibitor TIMP1. Mediates endocytosis of Sonic hedgehog protein N-product (ShhN), the active product of SHH. Also mediates ShhN transcytosis. In the embryonic neuroepithelium, mediates endocytic uptake and degradation of BMP4, is required for correct SHH localization in the ventral neural tube and plays a role in patterning of the ventral telencephalon. Required at the onset of neurulation to sequester SHH on the apical surface of neuroepithelial cells of the rostral diencephalon ventral midline and to control PTCH1-dependent uptake and intracellular trafficking of SHH. During neurulation, required in neuroepithelial cells for uptake of folate bound to the folate receptor FOLR1 which is necessary for neural tube closure. In the adult brain, negatively regulates BMP signaling in the subependymal zone which enables neurogenesis to proceed. In astrocytes, mediates endocytosis of ALB which is required for the synthesis of the neurotrophic factor oleic acid. Involved in neurite branching. During optic nerve development, required for SHH-mediated migration and proliferation of oligodendrocyte precursor cells. Mediates endocytic uptake and clearance of SHH in the retinal margin which protects retinal progenitor cells from mitogenic stimuli and keeps them quiescent. Plays a role in reproductive organ development by mediating uptake in reproductive tissues of androgen and estrogen bound to the sex hormone binding protein SHBG. Mediates endocytosis of angiotensin-2. Also mediates endocytosis of angiotensis 1-7. Binds to the complex composed of beta-amyloid protein 40 and CLU/APOJ and mediates its endocytosis and lysosomal degradation. Required for embryonic heart development. Required for normal hearing, possibly through interaction with estrogen in the inner ear. The sequence is that of Low-density lipoprotein receptor-related protein 2 from Sus scrofa (Pig).